Consider the following 501-residue polypeptide: MSFPQLGYQYIRPLYPSERPGAAGGSGGSAGARGGLGAGASELNASGSLSNVLSSVYGAPYAAAAAAAAAQGYGAFLPYAAELPIFPQLGAQYELKDSPGVQHPAAAAAFPHPHPAFYPYGQYQFGDPSRPKNATRESTSTLKAWLNEHRKNPYPTKGEKIMLAIITKMTLTQVSTWFANARRRLKKENKMTWAPRSRTDEEGNAYGSEREEEDEEEDEEDGKRELELEEEELGGEEEDTGGEGLADDDEDEEIDLENLDGAATEPELSLAGAARRDGDLGLGPISDSKNSDSEDSSEGLEDRPLPVLSLAPAPPPVAVASPSLPSPPVSLDPCAPAPAPASALQKPKIWSLAETATSPDNPRRSPPGAGGSPPGAAVAPSALQLSPAAAAAAAHRLVSAPLGKFPAWTNRPFPGPPPGPRLHPLSLLGSAPPHLLGLPGAAGHPAAAAAFARPAEPEGGTDRCSALEVEKKLLKTAFQPVPRRPQNHLDAALVLSALSSS.

The homeobox; TALE-type DNA-binding region spans 125 to 188; sequence FGDPSRPKNA…ANARRRLKKE (64 aa). Residues 190–381 are disordered; it reads KMTWAPRSRT…SPPGAAVAPS (192 aa). 2 stretches are compositionally biased toward acidic residues: residues 210–220 and 227–258; these read REEEDEEEDEE and ELEE…DLEN. Phosphoserine is present on residues Ser323 and Ser326. The segment covering 324 to 339 has biased composition (pro residues); that stretch reads LPSPPVSLDPCAPAPA.

It belongs to the TALE/IRO homeobox family.

The protein resides in the nucleus. Transcription factor involved in SHH-dependent neural patterning. Together with NKX2-2 and NKX6-1 acts to restrict the generation of motor neurons to the appropriate region of the neural tube. Belongs to the class I proteins of neuronal progenitor factors, which are repressed by SHH signals. Involved in the transcriptional repression of MNX1 in non-motor neuron cells. Acts as a regulator of energy metabolism. This is Iroquois-class homeodomain protein IRX-3 (IRX3) from Homo sapiens (Human).